A 133-amino-acid polypeptide reads, in one-letter code: Ribonuclease VapC28 (133 aa).

The PINc domain maps to 1–124; sequence MIVDTSAIIA…LWKGNDFGHT (124 aa). Residues aspartate 4 and aspartate 100 each coordinate Mg(2+).

Belongs to the PINc/VapC protein family. Mg(2+) serves as cofactor.

Toxic component of a type II toxin-antitoxin (TA) system. An RNase. Upon expression in M.smegmatis inhibits colony formation. Its toxic effect is neutralized by coexpression with cognate antitoxin VapB28. The polypeptide is Ribonuclease VapC28 (Mycobacterium tuberculosis (strain ATCC 25618 / H37Rv)).